The primary structure comprises 1795 residues: Type III effector AvrE (1795 aa).

Residues 1-18 (MQSPSIHRNTGSIIQPTV) show a composition bias toward polar residues. Residues 1-227 (MQSPSIHRNT…PPREPMLWRS (227 aa)) are disordered. Residues 60 to 75 (KSKAPQQKAATPPTAK) show a composition bias toward low complexity. 2 stretches are compositionally biased toward polar residues: residues 97 to 109 (GFSN…THSA) and 117 to 127 (HPNQASSSGAQ). A compositionally biased stretch (basic and acidic residues) spans 129 to 154 (HEIHPEAAPRKNLRVRFDLPQDRLER). The span at 174 to 191 (ATRQFRSPDSHLQGSDGT) shows a compositional bias: polar residues. Residues 203-215 (PSSSGSKIGDSDG) show a composition bias toward low complexity. 2 consecutive short sequence motifs (wxxxE) follow at residues 393–397 (WKIPE) and 829–833 (WQRFE). The tract at residues 1461–1488 (QIGGSHTAPTGTPASAPGPTPASQTAAN) is disordered. A compositionally biased stretch (low complexity) spans 1467–1487 (TAPTGTPASAPGPTPASQTAA). Residues 1787 to 1790 (KKEG) carry the ERMRS motif.

Belongs to the AvrE family. As to quaternary structure, in planta interaction assays, interacts with the A.thaliana protein phosphatase 2A (PP2A) via direct interaction/association with specific B' regulatory subunits.

Its subcellular location is the secreted. The protein localises to the host cell. The protein resides in the host cell membrane. Its activity is regulated as follows. Polyamidoamine dendrimers inhibit channel and virulence activities. In terms of biological role, major virulence factor that may function as a water- and solute-permeable channel dedicated to creating osmotic/water potential perturbation and a water- and nutrient-rich apoplast in which bacteria multiply within the infected plant tissues. Expression in Xenopus oocytes results in inward and outward currents, permeability to water and osmolarity-dependent oocyte swelling and bursting. Elicits cell death in host tomato leaves and in non-host Nicotiana tabacum leaves. Acts within plant cells and promotes lesion formation. The combined action of AvrE and HopM1 is particularly important in promoting bacterial growth in plants. Contributes to the down-regulation of a specific subset of A.thaliana genes during infection, including NHL13, which is required for antibacterial immunity. This Pseudomonas syringae pv. tomato (strain ATCC BAA-871 / DC3000) protein is Type III effector AvrE.